Here is a 289-residue protein sequence, read N- to C-terminus: uncharacterized protein (289 aa).

The segment at 25–66 is disordered; that stretch reads GGSGDSQSAHTPSTSIHTQNNSTPNKNTSTPPVNVSNANNLE. Residues 33–43 show a composition bias toward polar residues; the sequence is AHTPSTSIHTQ. The span at 44–59 shows a compositional bias: low complexity; it reads NNSTPNKNTSTPPVNV.

This is an uncharacterized protein from Haemophilus influenzae (strain ATCC 51907 / DSM 11121 / KW20 / Rd).